Here is a 386-residue protein sequence, read N- to C-terminus: S-adenosylmethionine synthase (386 aa).

H16 lines the ATP pocket. Mg(2+) is bound at residue D18. K(+) is bound at residue E44. L-methionine is bound by residues E57 and Q100. The tract at residues 100-110 (QSRDITQGVDR) is flexible loop. ATP is bound by residues 165-167 (DAK), D240, 246-247 (RK), A263, and K267. D240 lines the L-methionine pocket. K271 is an L-methionine binding site.

The protein belongs to the AdoMet synthase family. As to quaternary structure, homotetramer; dimer of dimers. The cofactor is Mg(2+). It depends on K(+) as a cofactor.

Its subcellular location is the cytoplasm. The catalysed reaction is L-methionine + ATP + H2O = S-adenosyl-L-methionine + phosphate + diphosphate. It participates in amino-acid biosynthesis; S-adenosyl-L-methionine biosynthesis; S-adenosyl-L-methionine from L-methionine: step 1/1. In terms of biological role, catalyzes the formation of S-adenosylmethionine (AdoMet) from methionine and ATP. The overall synthetic reaction is composed of two sequential steps, AdoMet formation and the subsequent tripolyphosphate hydrolysis which occurs prior to release of AdoMet from the enzyme. The protein is S-adenosylmethionine synthase of Francisella tularensis subsp. tularensis (strain FSC 198).